Consider the following 113-residue polypeptide: U11-theraphotoxin-Hhn1l (113 aa).

The signal sequence occupies residues 1–21 (MNTGRVTFLVVFLVAVSLGPA). The propeptide occupies 22–74 (DKEENPMEMQEKTQQGKNYLNFGENLVVPKLEELKAKLVEKESKKSKNSRQKR). 2 cysteine pairs are disulfide-bonded: cysteine 82/cysteine 95 and cysteine 89/cysteine 110.

This sequence belongs to the neurotoxin 14 (magi-1) family. 01 (HNTX-16) subfamily. As to expression, expressed by the venom gland.

The protein localises to the secreted. Probable ion channel inhibitor. The sequence is that of U11-theraphotoxin-Hhn1l from Cyriopagopus hainanus (Chinese bird spider).